We begin with the raw amino-acid sequence, 141 residues long: MLTADDKKILAQLWEKVAGHQDEFGNEALERMFVTYPQTKTYFPHFDLHPGSEQVRSHGKKVAAALSNAVKSIDNLSQALSELSNLHAYNLRVDPANFKLLSQCFQVVLAVHLGKDYTPEMHAAFDKFLSAVAAVLAEKYR.

In terms of domain architecture, Globin spans 1–141 (MLTADDKKIL…VAAVLAEKYR (141 aa)). Residues histidine 58 and histidine 87 each coordinate heme b.

It belongs to the globin family. In terms of assembly, heterotetramer of two alpha-D chains and two beta chains. Red blood cells.

In terms of biological role, involved in oxygen transport from the lung to the various peripheral tissues. The chain is Hemoglobin subunit alpha-D (HBAD) from Branta canadensis (Canada goose).